Consider the following 248-residue polypeptide: Probable transcriptional regulatory protein FTN_1028 (248 aa).

This sequence belongs to the TACO1 family.

It localises to the cytoplasm. The protein is Probable transcriptional regulatory protein FTN_1028 of Francisella tularensis subsp. novicida (strain U112).